We begin with the raw amino-acid sequence, 121 residues long: Large ribosomal subunit protein uL14 (121 aa).

Belongs to the universal ribosomal protein uL14 family. As to quaternary structure, part of the 50S ribosomal subunit. Forms a cluster with proteins L3 and L19. In the 70S ribosome, L14 and L19 interact and together make contacts with the 16S rRNA in bridges B5 and B8.

Binds to 23S rRNA. Forms part of two intersubunit bridges in the 70S ribosome. The sequence is that of Large ribosomal subunit protein uL14 from Bacteroides fragilis (strain ATCC 25285 / DSM 2151 / CCUG 4856 / JCM 11019 / LMG 10263 / NCTC 9343 / Onslow / VPI 2553 / EN-2).